The sequence spans 129 residues: Large ribosomal subunit protein bL12 (129 aa).

This sequence belongs to the bacterial ribosomal protein bL12 family. As to quaternary structure, homodimer. Part of the ribosomal stalk of the 50S ribosomal subunit. Forms a multimeric L10(L12)X complex, where L10 forms an elongated spine to which 2 to 4 L12 dimers bind in a sequential fashion. Binds GTP-bound translation factors.

Its function is as follows. Forms part of the ribosomal stalk which helps the ribosome interact with GTP-bound translation factors. Is thus essential for accurate translation. The sequence is that of Large ribosomal subunit protein bL12 from Solidesulfovibrio magneticus (strain ATCC 700980 / DSM 13731 / RS-1) (Desulfovibrio magneticus).